The sequence spans 361 residues: Polyribonucleotide 5'-hydroxyl-kinase MJ1315 (361 aa).

39-46 contributes to the ATP binding site; sequence GGVDSGKT.

Requires a divalent metal cation as cofactor.

It catalyses the reaction a 5'-end dephospho-2'-deoxyribonucleoside-DNA + ATP = a 5'-end 5'-phospho-2'-deoxyribonucleoside-DNA + ADP + H(+). The catalysed reaction is a 5'-end dephospho-ribonucleoside-RNA + ATP = a 5'-end 5'-phospho-ribonucleoside-RNA + ADP + H(+). Its function is as follows. Polynucleotide kinase that can phosphorylate the 5'-hydroxyl groups of both single-stranded RNA (ssRNA) and single-stranded DNA (ssDNA). Exhibits a strong preference for ssRNA. This is Polyribonucleotide 5'-hydroxyl-kinase MJ1315 from Methanocaldococcus jannaschii (strain ATCC 43067 / DSM 2661 / JAL-1 / JCM 10045 / NBRC 100440) (Methanococcus jannaschii).